The primary structure comprises 185 residues: Ribose 1,5-bisphosphate phosphokinase PhnN (185 aa).

10–17 (GPSGSGKD) serves as a coordination point for ATP.

Belongs to the ribose 1,5-bisphosphokinase family.

The enzyme catalyses alpha-D-ribose 1,5-bisphosphate + ATP = 5-phospho-alpha-D-ribose 1-diphosphate + ADP. The protein operates within metabolic intermediate biosynthesis; 5-phospho-alpha-D-ribose 1-diphosphate biosynthesis; 5-phospho-alpha-D-ribose 1-diphosphate from D-ribose 5-phosphate (route II): step 3/3. Functionally, catalyzes the phosphorylation of ribose 1,5-bisphosphate to 5-phospho-D-ribosyl alpha-1-diphosphate (PRPP). The chain is Ribose 1,5-bisphosphate phosphokinase PhnN from Shigella dysenteriae serotype 1 (strain Sd197).